The primary structure comprises 656 residues: Chaperone protein DnaK (656 aa).

Phosphothreonine; by autocatalysis is present on Thr-204. The disordered stretch occupies residues 607–656 (VYAKKGGAAGAPPGGEAEGEPQAQAGGKKEDVVDAEFEEVKDEKKKDEDK). A compositionally biased stretch (low complexity) spans 620–632 (GGEAEGEPQAQAG). Over residues 647-656 (KDEKKKDEDK) the composition is skewed to basic and acidic residues.

The protein belongs to the heat shock protein 70 family.

In terms of biological role, acts as a chaperone. This Coxiella burnetii (strain CbuK_Q154) (Coxiella burnetii (strain Q154)) protein is Chaperone protein DnaK.